Here is a 556-residue protein sequence, read N- to C-terminus: Dihydroxy-acid dehydratase (556 aa).

[2Fe-2S] cluster is bound at residue C47. Position 79 (D79) interacts with Mg(2+). C120 contributes to the [2Fe-2S] cluster binding site. D121 and K122 together coordinate Mg(2+). Residue K122 is modified to N6-carboxylysine. Residue C192 participates in [2Fe-2S] cluster binding. Residue E444 participates in Mg(2+) binding. The active-site Proton acceptor is the S470.

Belongs to the IlvD/Edd family. Homodimer. [2Fe-2S] cluster serves as cofactor. Requires Mg(2+) as cofactor.

It carries out the reaction (2R)-2,3-dihydroxy-3-methylbutanoate = 3-methyl-2-oxobutanoate + H2O. The catalysed reaction is (2R,3R)-2,3-dihydroxy-3-methylpentanoate = (S)-3-methyl-2-oxopentanoate + H2O. It participates in amino-acid biosynthesis; L-isoleucine biosynthesis; L-isoleucine from 2-oxobutanoate: step 3/4. It functions in the pathway amino-acid biosynthesis; L-valine biosynthesis; L-valine from pyruvate: step 3/4. In terms of biological role, functions in the biosynthesis of branched-chain amino acids. Catalyzes the dehydration of (2R,3R)-2,3-dihydroxy-3-methylpentanoate (2,3-dihydroxy-3-methylvalerate) into 2-oxo-3-methylpentanoate (2-oxo-3-methylvalerate) and of (2R)-2,3-dihydroxy-3-methylbutanoate (2,3-dihydroxyisovalerate) into 2-oxo-3-methylbutanoate (2-oxoisovalerate), the penultimate precursor to L-isoleucine and L-valine, respectively. In Prochlorococcus marinus (strain MIT 9313), this protein is Dihydroxy-acid dehydratase.